The following is a 485-amino-acid chain: Carbohydrate sulfotransferase 7 (485 aa).

The Cytoplasmic segment spans residues 1–12; sequence MKGRRRRRREYC. Residues 13–33 traverse the membrane as a helical; Signal-anchor for type II membrane protein segment; it reads KFTLLLALYTLLLLLVPSVLD. Residues 34–485 are Lumenal-facing; sequence SGSEQDKGGR…PLETNANWAT (452 aa). Residues 66-88 form a disordered region; it reads EQGAEVRFQAEGNPDRSPRPQGN. The N-linked (GlcNAc...) asparagine glycan is linked to asparagine 88. 109–115 serves as a coordination point for 3'-phosphoadenylyl sulfate; that stretch reads WRTGSSF. N-linked (GlcNAc...) asparagine glycosylation occurs at asparagine 185. Residue 277 to 285 participates in 3'-phosphoadenylyl sulfate binding; it reads RDPRAVHNS. A glycan (N-linked (GlcNAc...) asparagine) is linked at asparagine 406. Serine 461 is modified (phosphoserine). Positions 465-475 are enriched in basic and acidic residues; that stretch reads RDVKTVRKGET. Residues 465–485 are disordered; sequence RDVKTVRKGETPLETNANWAT.

This sequence belongs to the sulfotransferase 1 family. Gal/GlcNAc/GalNAc subfamily.

The protein localises to the golgi apparatus membrane. The catalysed reaction is chondroitin beta-D-glucuronate + n 3'-phosphoadenylyl sulfate = chondroitin 6'-sulfate + n adenosine 3',5'-bisphosphate + n H(+). In terms of biological role, sulfotransferase that utilizes 3'-phospho-5'-adenylyl sulfate (PAPS) as sulfonate donor to catalyze the transfer of sulfate to position 6 of non-reducing N-acetylglucosamine (GlcNAc) residues. Preferentially acts on mannose-linked GlcNAc. Also able to catalyze the transfer of sulfate to position 6 of the N-acetylgalactosamine (GalNAc) residue of chondroitin. Also acts on core 2 mucin-type oligosaccharide and N-acetyllactosamine oligomer with a lower efficiency. Has weak or no activity toward keratan sulfate and oligosaccharides containing the Galbeta1-4GlcNAc. Catalyzes 6-O-sulfation of beta-benzyl GlcNAc but not alpha- or beta-benzyl GalNAc. This Rattus norvegicus (Rat) protein is Carbohydrate sulfotransferase 7 (Chst7).